The sequence spans 96 residues: Small ribosomal subunit protein bS20 (96 aa).

Belongs to the bacterial ribosomal protein bS20 family.

Binds directly to 16S ribosomal RNA. The polypeptide is Small ribosomal subunit protein bS20 (Thermotoga petrophila (strain ATCC BAA-488 / DSM 13995 / JCM 10881 / RKU-1)).